Here is a 171-residue protein sequence, read N- to C-terminus: Ribosome maturation factor RimM (171 aa).

The 75-residue stretch at 96–170 (AEGEYYYHEI…LVTIHVTEGL (75 aa)) folds into the PRC barrel domain.

It belongs to the RimM family. Binds ribosomal protein uS19.

The protein localises to the cytoplasm. An accessory protein needed during the final step in the assembly of 30S ribosomal subunit, possibly for assembly of the head region. Essential for efficient processing of 16S rRNA. May be needed both before and after RbfA during the maturation of 16S rRNA. It has affinity for free ribosomal 30S subunits but not for 70S ribosomes. The protein is Ribosome maturation factor RimM of Bacillus anthracis (strain A0248).